The following is a 299-amino-acid chain: Acetylglutamate kinase (299 aa).

Residues 64-65 (GG), arginine 86, and asparagine 197 each bind substrate.

The protein belongs to the acetylglutamate kinase family. ArgB subfamily.

It localises to the cytoplasm. The catalysed reaction is N-acetyl-L-glutamate + ATP = N-acetyl-L-glutamyl 5-phosphate + ADP. Its pathway is amino-acid biosynthesis; L-arginine biosynthesis; N(2)-acetyl-L-ornithine from L-glutamate: step 2/4. Its function is as follows. Catalyzes the ATP-dependent phosphorylation of N-acetyl-L-glutamate. The protein is Acetylglutamate kinase of Sulfurihydrogenibium sp. (strain YO3AOP1).